The sequence spans 305 residues: 5'-hydroxyaverantin dehydrogenase stcG (305 aa).

7 residues coordinate NADP(+): Ser25, Leu27, Gln48, Asp68, Tyr186, Lys190, and Ser221. Tyr186 acts as the Proton acceptor in catalysis. Lys190 serves as the catalytic Lowers pKa of active site Tyr.

It belongs to the short-chain dehydrogenases/reductases (SDR) family.

The enzyme catalyses (1'S,5'S)-5'-hydroxyaverantin + NAD(+) = (S)-5'-oxoaverantin + NADH + H(+). It catalyses the reaction (1'S,5'R)-5'-hydroxyaverantin + NAD(+) = (S)-5'-oxoaverantin + NADH + 2 H(+). The protein operates within mycotoxin biosynthesis; sterigmatocystin biosynthesis. Functionally, 5'-hydroxyaverantin dehydrogenase; part of the gene cluster that mediates the biosynthesis of sterigmatocystin (ST), a polyketide-derived furanocoumarin which is part of the most toxic and carcinogenic compounds among the known mycotoxins. The first step in the biosynthesis of sterigmatocystin is the production of hexanoate by the fatty acid synthase (FAS) units stcJ and stcK. The polyketide backbone is assembled by the non-reducing polyketide synthase stcA by condensation of the starter hexanoyl-CoA and 7 malonyl-CoA extender units followed by cyclization and release of norsolorinic acid. Norsolorinic acid is the first stable intermediate in the biosynthesis of sterigmatocystin and is converted into averantin (AVN) by the ketoreductase stcE which reduces the hexanoate ketone to an alcohol. Averantin is then oxidized into 5'-hydroxyaverantin (HAVN) by the cytochrome P450 monooxygenase stcF. 5'-hydroxyaverantin is further converted to 5'-oxyaverantin (OAVN) by the 5'-hydroxyaverantin dehydrogenase stcG. The next step is the conversion of OAVN into averufin (AVF) which is catalyzed by a yet to be identified enzyme. The cytochrome P450 monooxygenase stcB and the flavin-binding monooxygenase stcW are both required for the conversion of averufin to 1-hydroxyversicolorone. The esterase stcI probably catalyzes the formation of versiconal hemiacetal acetate from 1-hydroxyversicolorone. The oxydoreductase stcN then probably catalyzes the biosynthetic step from versiconal to versicolorin B (VERB). The next step is performed by the versicolorin B desaturase stcL to produce versicolorin A (VERA). The ketoreductase stcU and the cytochrome P450 monooxygenase stcS are involved in the conversion of versicolorin A to demethylsterigmatocystin. The Baeyer-Villiger oxidas stcQ and the reductase stcR might be involved in the biosynthetic step from versicolorin A to demethylsterigmatocystin. The final step in the biosynthesis of sterigmatocystin is the methylation of demethylsterigmatocystin catalyzed by the methyltransferase stcP. The protein is 5'-hydroxyaverantin dehydrogenase stcG of Emericella nidulans (strain FGSC A4 / ATCC 38163 / CBS 112.46 / NRRL 194 / M139) (Aspergillus nidulans).